Consider the following 310-residue polypeptide: 17-beta-hydroxysteroid dehydrogenase type 3 (310 aa).

48–77 (GQWAVITGAGDGIGKAYSFELAKRGLNVVL) provides a ligand contact to NADP(+). Serine 185 contributes to the substrate binding site. Tyrosine 198 (proton acceptor) is an active-site residue.

The protein belongs to the short-chain dehydrogenases/reductases (SDR) family. 17-beta-HSD 3 subfamily. In terms of tissue distribution, testis.

The protein localises to the endoplasmic reticulum. It catalyses the reaction a 17beta-hydroxy steroid + NADP(+) = a 17-oxo steroid + NADPH + H(+). The enzyme catalyses testosterone + NADP(+) = androst-4-ene-3,17-dione + NADPH + H(+). It carries out the reaction 17beta-estradiol + NADP(+) = estrone + NADPH + H(+). The catalysed reaction is 3beta-hydroxyandrost-5-en-17-one + NADPH + H(+) = androst-5-en-3beta,17beta-diol + NADP(+). It catalyses the reaction 17beta-hydroxy-5alpha-androstan-3-one + NADP(+) = 5alpha-androstan-3,17-dione + NADPH + H(+). The enzyme catalyses androsterone + NADPH + H(+) = 5alpha-androstane-3alpha,17beta-diol + NADP(+). It carries out the reaction 3beta-hydroxy-5alpha-androstan-17-one + NADPH + H(+) = 5alpha-androstane-3beta,17beta-diol + NADP(+). The catalysed reaction is androst-4-ene-3,11,17-trione + NADPH + H(+) = 17beta-hydroxyandrost-4-ene-3,11-dione + NADP(+). It catalyses the reaction 11beta-hydroxyandrost-4-ene-3,17-dione + NADPH + H(+) = 11beta,17beta-dihydroxyandrost-4-ene-3-one + NADP(+). Its pathway is hormone biosynthesis; testosterone biosynthesis. It participates in steroid metabolism. Its function is as follows. Catalyzes the conversion of 17-oxosteroids to 17beta-hydroxysteroids. Favors the reduction of androstenedione to testosterone. Testosterone is the key androgen driving male development and function. Uses NADPH while the two other EDH17B enzymes use NADH. Androgens such as epiandrosterone, dehydroepiandrosterone, androsterone and androstanedione are accepted as substrates and reduced at C-17. Can reduce 11-ketoandrostenedione as well as 11beta-hydroxyandrostenedione at C-17 to the respective testosterone forms. The chain is 17-beta-hydroxysteroid dehydrogenase type 3 from Homo sapiens (Human).